Consider the following 140-residue polypeptide: Endoribonuclease YbeY (140 aa).

His-100, His-104, and His-110 together coordinate Zn(2+).

Belongs to the endoribonuclease YbeY family. Zn(2+) serves as cofactor.

The protein localises to the cytoplasm. Its function is as follows. Single strand-specific metallo-endoribonuclease involved in late-stage 70S ribosome quality control and in maturation of the 3' terminus of the 16S rRNA. This is Endoribonuclease YbeY from Helicobacter pylori (strain ATCC 700392 / 26695) (Campylobacter pylori).